Consider the following 586-residue polypeptide: Kelch-like protein 7 (586 aa).

In terms of domain architecture, BTB spans 44–111; it reads CDVILMVQER…AYTARISVNS (68 aa). In terms of domain architecture, BACK spans 146–248; the sequence is CLGISVLAEC…SKNFLSKTVQ (103 aa). Kelch repeat units lie at residues 294–336, 337–382, 383–430, 431–481, 483–528, and 530–575; these read RIAL…FWDN, VVYI…AAEG, KIYT…EANG, LIYV…FVKD, IFAV…AVGS, and IYVL…CVVD.

As to quaternary structure, homodimer. Component of the BCR(KLHL7) E3 ubiquitin ligase complex, at least composed of CUL3 and KLHL7 and RBX1.

The protein localises to the nucleus. It localises to the cytoplasm. It participates in protein modification; protein ubiquitination. Functionally, substrate-specific adapter of a BCR (BTB-CUL3-RBX1) E3 ubiquitin ligase complex. The BCR(KLHL7) complex acts by mediating ubiquitination and subsequent degradation of substrate proteins. Probably mediates 'Lys-48'-linked ubiquitination. The sequence is that of Kelch-like protein 7 (Klhl7) from Rattus norvegicus (Rat).